The primary structure comprises 649 residues: Phosphomethylpyrimidine synthase (649 aa).

Substrate contacts are provided by residues N235, M264, Y293, H329, 349–351, 390–393, and E429; these read SRG and DGLR. H433 contacts Zn(2+). Residue Y456 coordinates substrate. H497 is a binding site for Zn(2+). Positions 577, 580, and 585 each coordinate [4Fe-4S] cluster. Residues 620–649 form a disordered region; the sequence is GMRQKSQEFRDTGSELYHPAVGAKEAQLEE. Residues 621 to 632 are compositionally biased toward basic and acidic residues; that stretch reads MRQKSQEFRDTG.

Belongs to the ThiC family. Homodimer. [4Fe-4S] cluster is required as a cofactor.

The catalysed reaction is 5-amino-1-(5-phospho-beta-D-ribosyl)imidazole + S-adenosyl-L-methionine = 4-amino-2-methyl-5-(phosphooxymethyl)pyrimidine + CO + 5'-deoxyadenosine + formate + L-methionine + 3 H(+). It functions in the pathway cofactor biosynthesis; thiamine diphosphate biosynthesis. Catalyzes the synthesis of the hydroxymethylpyrimidine phosphate (HMP-P) moiety of thiamine from aminoimidazole ribotide (AIR) in a radical S-adenosyl-L-methionine (SAM)-dependent reaction. This is Phosphomethylpyrimidine synthase from Vibrio atlanticus (strain LGP32) (Vibrio splendidus (strain Mel32)).